The chain runs to 641 residues: Fibrinogen alpha-2 chain (641 aa).

The signal sequence occupies residues 1-23 (MTLRGVSMVLTWCLLVSKAWSSG). A coiled-coil region spans residues 107-226 (SVSDVSNQVV…IVHESFSVER (120 aa)). The interval 228-327 (DARSLHPYSG…QKTEELSFKK (100 aa)) is disordered. The N-linked (GlcNAc...) asparagine glycan is linked to asparagine 271. The segment covering 279–289 (VDERSKVEKDV) has biased composition (basic and acidic residues). Positions 293–317 (STSSVSSSSSSSSSSSSTSSTISST) are enriched in low complexity. One can recognise a Fibrinogen C-terminal domain in the interval 395 to 636 (RTNLSEYIDC…RTAVRFRRVQ (242 aa)). An N-linked (GlcNAc...) asparagine glycan is attached at asparagine 397. Cysteine 404 and cysteine 435 form a disulfide bridge. N-linked (GlcNAc...) asparagine glycosylation is present at asparagine 458. An intrachain disulfide couples cysteine 571 to cysteine 584.

In terms of assembly, heterohexamer; disulfide linked. Contains 2 sets of 3 non-identical chains (alpha, beta and gamma). The 2 heterotrimers are in head to head conformation with the N-termini in a small central domain. Post-translationally, conversion of fibrinogen to fibrin is triggered by thrombin, which cleaves fibrinopeptides A and B from alpha and beta chains, and thus exposes the N-terminal polymerization sites responsible for the formation of the soft clot. The soft clot is converted into the hard clot by factor XIIIA which catalyzes the epsilon-(gamma-glutamyl)lysine cross-linking between gamma chains (stronger) and between alpha chains (weaker) of different monomers. Forms F13A-mediated cross-links between a glutamine and the epsilon-amino group of a lysine residue, forming fibronectin-fibrinogen heteropolymers.

The protein resides in the secreted. Its function is as follows. Fibrinogen has a double function: yielding monomers that polymerize into fibrin and acting as a cofactor in platelet aggregation. This chain is Fibrinogen alpha-2 chain, found in Petromyzon marinus (Sea lamprey).